Here is a 329-residue protein sequence, read N- to C-terminus: Ketol-acid reductoisomerase (NADP(+)) (329 aa).

The KARI N-terminal Rossmann domain maps to 2–182 (ARMYYEKDVD…GATRAGVLET (181 aa)). NADP(+) contacts are provided by residues 25–28 (YGSQ), serine 51, serine 53, and 83–86 (DEKQ). Residue histidine 108 is part of the active site. Glycine 134 serves as a coordination point for NADP(+). The region spanning 183-328 (TFKEETETDL…RNLRSMMSFL (146 aa)) is the KARI C-terminal knotted domain. Mg(2+) is bound by residues aspartate 191, glutamate 195, glutamate 227, and glutamate 231. Residue serine 252 coordinates substrate.

The protein belongs to the ketol-acid reductoisomerase family. Mg(2+) is required as a cofactor.

It carries out the reaction (2R)-2,3-dihydroxy-3-methylbutanoate + NADP(+) = (2S)-2-acetolactate + NADPH + H(+). The enzyme catalyses (2R,3R)-2,3-dihydroxy-3-methylpentanoate + NADP(+) = (S)-2-ethyl-2-hydroxy-3-oxobutanoate + NADPH + H(+). It participates in amino-acid biosynthesis; L-isoleucine biosynthesis; L-isoleucine from 2-oxobutanoate: step 2/4. It functions in the pathway amino-acid biosynthesis; L-valine biosynthesis; L-valine from pyruvate: step 2/4. Functionally, involved in the biosynthesis of branched-chain amino acids (BCAA). Catalyzes an alkyl-migration followed by a ketol-acid reduction of (S)-2-acetolactate (S2AL) to yield (R)-2,3-dihydroxy-isovalerate. In the isomerase reaction, S2AL is rearranged via a Mg-dependent methyl migration to produce 3-hydroxy-3-methyl-2-ketobutyrate (HMKB). In the reductase reaction, this 2-ketoacid undergoes a metal-dependent reduction by NADPH to yield (R)-2,3-dihydroxy-isovalerate. This chain is Ketol-acid reductoisomerase (NADP(+)), found in Clostridioides difficile (strain 630) (Peptoclostridium difficile).